The following is a 194-amino-acid chain: Fe/S biogenesis protein NfuA (194 aa).

[4Fe-4S] cluster is bound by residues Cys-151 and Cys-154.

Belongs to the NfuA family. Homodimer. Requires [4Fe-4S] cluster as cofactor.

Functionally, involved in iron-sulfur cluster biogenesis. Binds a 4Fe-4S cluster, can transfer this cluster to apoproteins, and thereby intervenes in the maturation of Fe/S proteins. Could also act as a scaffold/chaperone for damaged Fe/S proteins. This Pasteurella multocida (strain Pm70) protein is Fe/S biogenesis protein NfuA.